Here is a 159-residue protein sequence, read N- to C-terminus: SsrA-binding protein (159 aa).

It belongs to the SmpB family.

The protein localises to the cytoplasm. In terms of biological role, required for rescue of stalled ribosomes mediated by trans-translation. Binds to transfer-messenger RNA (tmRNA), required for stable association of tmRNA with ribosomes. tmRNA and SmpB together mimic tRNA shape, replacing the anticodon stem-loop with SmpB. tmRNA is encoded by the ssrA gene; the 2 termini fold to resemble tRNA(Ala) and it encodes a 'tag peptide', a short internal open reading frame. During trans-translation Ala-aminoacylated tmRNA acts like a tRNA, entering the A-site of stalled ribosomes, displacing the stalled mRNA. The ribosome then switches to translate the ORF on the tmRNA; the nascent peptide is terminated with the 'tag peptide' encoded by the tmRNA and targeted for degradation. The ribosome is freed to recommence translation, which seems to be the essential function of trans-translation. The sequence is that of SsrA-binding protein from Acidothermus cellulolyticus (strain ATCC 43068 / DSM 8971 / 11B).